Consider the following 610-residue polypeptide: Mitochondrial import receptor subunit TOM70 (610 aa).

Ala-2 is modified (N-acetylalanine). Over 2-41 the chain is Mitochondrial intermembrane; the sequence is AASKPVEAAMAAAAAPASGNGVGSSGGTAAPGSGAGTLPR. The helical transmembrane segment at 42–62 threads the bilayer; sequence WHVALAIGAPLLLGAGAMYLW. The Cytoplasmic segment spans residues 63-610; it reads SRRRRRREAG…KKYGLKPPTL (548 aa). The segment at 69–109 is disordered; it reads REAGGRGDASGLKRNSERKTPEGRASPALGSGPDGSGDSLE. Arg-74 is subject to Omega-N-methylarginine. Low complexity predominate over residues 93-108; sequence ASPALGSGPDGSGDSL. A phosphoserine mark is found at Ser-94, Ser-99, Ser-104, Ser-107, and Ser-112. 2 TPR repeats span residues 116–149 and 155–188; these read AQAA…CPTE and STFY…NPKY. At Lys-187 the chain carries N6-acetyllysine. Residue Lys-277 forms a Glycyl lysine isopeptide (Lys-Gly) (interchain with G-Cter in SUMO2) linkage. 8 TPR repeats span residues 296-329, 331-364, 369-402, 403-436, 444-477, 478-511, 513-546, and 547-580; these read ENSG…QGKY, AEAL…KEAN, ANAL…DPMN, SDVY…RPKF, CFAL…FPRC, AEGY…EPDN, TTYV…DNKC, and DFAY…AKSE.

It belongs to the Tom70 family. In terms of assembly, forms part of the preprotein translocase complex of the outer mitochondrial membrane (TOM complex) which consists of at least 7 different proteins (TOMM5, TOMM6, TOMM7, TOMM20, TOMM22, TOMM40 and TOMM70). Interacts with CAPN8. Interacts with TRADD, TRAF6 and STING. Interacts with MAVS. Interacts with HSPA8 and HSP90AA1; both interactions are required for preprotein mitochondrial import. The interaction with HSP90AA1 is direct and mediates the association of TOMM70 with IRF3 and TBK1. Upon mitochondrial depolarization, interacts with PINK1; the interaction is required for PINK1-TOM-TIM23 supercomplex formation which is critical for PINK1 stabilization at the outer mitochondrial membrane, kinase activation and downstream mitophagy.

Its subcellular location is the mitochondrion outer membrane. Acts as a receptor of the preprotein translocase complex of the outer mitochondrial membrane (TOM complex). Recognizes and mediates the translocation of mitochondrial preproteins from the cytosol into the mitochondria in a chaperone dependent manner. Mediates TBK1 and IRF3 activation induced by MAVS in response to Sendai virus infection and promotes host antiviral responses during virus infection. This chain is Mitochondrial import receptor subunit TOM70, found in Rattus norvegicus (Rat).